Here is a 344-residue protein sequence, read N- to C-terminus: tRNA N6-adenosine threonylcarbamoyltransferase (344 aa).

2 residues coordinate Fe cation: His110 and His114. Substrate is bound by residues 132–136, Asp166, Gly179, Asp183, and Asn278; that span reads LVSGG. Asp306 contacts Fe cation.

It belongs to the KAE1 / TsaD family. It depends on Fe(2+) as a cofactor.

Its subcellular location is the cytoplasm. It catalyses the reaction L-threonylcarbamoyladenylate + adenosine(37) in tRNA = N(6)-L-threonylcarbamoyladenosine(37) in tRNA + AMP + H(+). Its function is as follows. Required for the formation of a threonylcarbamoyl group on adenosine at position 37 (t(6)A37) in tRNAs that read codons beginning with adenine. Is involved in the transfer of the threonylcarbamoyl moiety of threonylcarbamoyl-AMP (TC-AMP) to the N6 group of A37, together with TsaE and TsaB. TsaD likely plays a direct catalytic role in this reaction. The chain is tRNA N6-adenosine threonylcarbamoyltransferase from Nocardia farcinica (strain IFM 10152).